The chain runs to 838 residues: MAQTAVGDLVVNLDVNSTKFNEQLSYVKKELKQTGNTANDEALRIQQSFSRQENAARKAGISVGQYNAAMRMLPAQFTDVATQLAGGQNPWLILLQQGGQVKDSFGGIIPTFRALLGTISPLMVGIGALSVATGALFYAWYQGSSTLSDFNKTLVLSGNTAGLTADRMLALARNGQAAGLTFNQTSEALTELINAGVRTGSRFDEMSQAVARFTDASGVPVEKVAAAYGKLATDPTSGLIAMAQQFHNVTAEQIAHVAQLQRAGDEAGALQAANEAATAGFNDQTKAIRDNMGTIESSADSLKRAFKSMWDAALDIGRPDTAQEMVAKAEAAFKKADEIWNLRKGDRYVNDEARARFWNDRETARLALDMAQQQAGIARANEENASREAAAESDRQKYAAQAQANYAKTQTALEKYTARQSELNKALKEGRILQADYNINLAAAKKEYEDTLKKPKKTPAIRTPAGARATDTASAQTLELQAQLRTLQEHKSINDTISQQRQELWRQQSRFTVLEEAAKTRTLSAEEKSLLASKSEVLSRAELNAKLGDQIVAQERLNRLQDTSQKYVTQIGEKTRALAESAGMSSRAAQRRNEEAQLLQGWKNGGGSENDAGYQNELQALQAYYAEQDKLRDDWQSGAKSAWADYVDSASDAYGQMKSFATSTFDGIGQNMADMLTRGKADWADFTRSTLSMLTQILLKQAMVGLVDSATTALGFAGGGYTGSGGKYEPAGVVHRGEFVFTKEATNRIGVGNLYRMMKGYATGGYVGGGGTGPAAAPFGVSVYAPVTVENASGNAQQQNDGDRLGKAYQQVINKSVNDGIARAIQPGGLIWNATNRR.

The interval 378-397 is disordered; it reads ARANEENASREAAAESDRQK. Residues 380–397 are compositionally biased toward basic and acidic residues; sequence ANEENASREAAAESDRQK. Residues 399–419 are a coiled coil; the sequence is AAQAQANYAKTQTALEKYTAR.

Belongs to the Lambdavirus tape measure protein family. As to quaternary structure, interacts with the tail initiator complex presumably through its C-terminus domain. Interacts with the tail assembly proteins.

It is found in the virion. Serves as a ruler that controls the length of tail by stopping the tail tube polymerization and is probably released from the tail shaft during infection to facilitate DNA translocation into the host cell. Assembles into a multimeric linear form probably arranged as a coil of alpha-helices and stabilized by the covering tail assembly proteins. Its C-terminus fixes the tail tip complex, thereby forming the tail assembly initiator complex. Tail tube proteins polymerize around the tape measure protein, displacing the tail assembly proteins. When the tail reaches the length specified by the tape measure protein, it stops and becomes capped by the tail terminator protein. The chain is Tape measure protein from Escherichia coli (Bacteriophage N15).